We begin with the raw amino-acid sequence, 389 residues long: Homoserine O-acetyltransferase (389 aa).

The interval 1–21 (MAALRAGKTNNEADQPSSPVL) is disordered. Positions 8-18 (KTNNEADQPSS) are enriched in polar residues. In terms of domain architecture, AB hydrolase-1 spans 56-366 (NAILVCHALT…DRGHDAFLLD (311 aa)). Ser-161 (nucleophile) is an active-site residue. Arg-231 contributes to the substrate binding site. Catalysis depends on residues Asp-327 and His-360. Asp-361 is a substrate binding site.

The protein belongs to the AB hydrolase superfamily. MetX family. Homodimer.

The protein resides in the cytoplasm. It catalyses the reaction L-homoserine + acetyl-CoA = O-acetyl-L-homoserine + CoA. It functions in the pathway amino-acid biosynthesis; L-methionine biosynthesis via de novo pathway; O-acetyl-L-homoserine from L-homoserine: step 1/1. In terms of biological role, transfers an acetyl group from acetyl-CoA to L-homoserine, forming acetyl-L-homoserine. The chain is Homoserine O-acetyltransferase from Mesorhizobium japonicum (strain LMG 29417 / CECT 9101 / MAFF 303099) (Mesorhizobium loti (strain MAFF 303099)).